Here is a 1529-residue protein sequence, read N- to C-terminus: Protein STU1 (1529 aa).

Disordered regions lie at residues 266 to 314 (SMGR…DEQI), 617 to 638 (KPRT…ARKA), 651 to 745 (KELR…SQGI), and 1070 to 1090 (SAND…TSPI). Over residues 273-290 (TISSNSSTPASLSSSTMS) the composition is skewed to low complexity. Composition is skewed to polar residues over residues 295 to 308 (RTNF…ISPS) and 619 to 634 (RTIT…SSLT). The span at 660-674 (TSISRPSSRINSTSS) shows a compositional bias: low complexity. The segment covering 708–723 (TPSTSSLSRVESNQDA) has biased composition (polar residues).

This sequence belongs to the CLASP family. In terms of assembly, interacts with microtubules.

Its subcellular location is the cytoplasm. The protein localises to the cytoskeleton. The protein resides in the nucleus. It is found in the spindle. In terms of biological role, microtubule binding protein that promotes the stabilization of dynamic microtubules. Required for mitotic spindle formation. This Debaryomyces hansenii (strain ATCC 36239 / CBS 767 / BCRC 21394 / JCM 1990 / NBRC 0083 / IGC 2968) (Yeast) protein is Protein STU1 (STU1).